A 213-amino-acid chain; its full sequence is Negative modulator of initiation of replication (213 aa).

3 interaction with DNA regions span residues 116-117, 145-149, and 179-185; these read AV, RTRVY, and NTNSGRK.

Belongs to the SeqA family. In terms of assembly, homodimer. Polymerizes to form helical filaments.

Its subcellular location is the cytoplasm. Its function is as follows. Negative regulator of replication initiation, which contributes to regulation of DNA replication and ensures that replication initiation occurs exactly once per chromosome per cell cycle. Binds to pairs of hemimethylated GATC sequences in the oriC region, thus preventing assembly of replication proteins and re-initiation at newly replicated origins. Repression is relieved when the region becomes fully methylated. The sequence is that of Negative modulator of initiation of replication from Haemophilus parainfluenzae (strain T3T1).